The chain runs to 96 residues: MF6 protein (96 aa).

In Myxoma virus (strain Uriarra) (MYXV), this protein is MF6 protein.